The following is a 202-amino-acid chain: Recombination protein RecR (202 aa).

The C4-type zinc-finger motif lies at 59 to 74; it reads CSVCFHLSAEPVCEIC. The 95-residue stretch at 82 to 176 folds into the Toprim domain; that stretch reads HTICVVADSR…KVTRIAFGLP (95 aa).

The protein belongs to the RecR family.

May play a role in DNA repair. It seems to be involved in an RecBC-independent recombinational process of DNA repair. It may act with RecF and RecO. This Thermosynechococcus vestitus (strain NIES-2133 / IAM M-273 / BP-1) protein is Recombination protein RecR.